We begin with the raw amino-acid sequence, 910 residues long: Protein translocase subunit SecA (910 aa).

Residues Q89, 107–111 (GEGKT), and D496 each bind ATP. The interval 873 to 910 (QEFSGGNLNRSQSNGSSVTVTTSSGGGTERKTSRRRKR) is disordered. Positions 876–886 (SGGNLNRSQSN) are enriched in polar residues.

Belongs to the SecA family. In terms of assembly, monomer and homodimer. Part of the essential Sec protein translocation apparatus which comprises SecA, SecYEG and auxiliary proteins SecDF. Other proteins may also be involved.

It localises to the cell inner membrane. Its subcellular location is the cytoplasm. The catalysed reaction is ATP + H2O + cellular proteinSide 1 = ADP + phosphate + cellular proteinSide 2.. Its function is as follows. Part of the Sec protein translocase complex. Interacts with the SecYEG preprotein conducting channel. Has a central role in coupling the hydrolysis of ATP to the transfer of proteins into and across the cell membrane, serving as an ATP-driven molecular motor driving the stepwise translocation of polypeptide chains across the membrane. The polypeptide is Protein translocase subunit SecA (Leptospira interrogans serogroup Icterohaemorrhagiae serovar copenhageni (strain Fiocruz L1-130)).